Consider the following 179-residue polypeptide: Large ribosomal subunit protein uL6 (179 aa).

The protein belongs to the universal ribosomal protein uL6 family. As to quaternary structure, part of the 50S ribosomal subunit.

In terms of biological role, this protein binds to the 23S rRNA, and is important in its secondary structure. It is located near the subunit interface in the base of the L7/L12 stalk, and near the tRNA binding site of the peptidyltransferase center. This Mycobacterium ulcerans (strain Agy99) protein is Large ribosomal subunit protein uL6.